A 538-amino-acid chain; its full sequence is Hydroxylamine reductase (538 aa).

The [4Fe-4S] cluster site is built by cysteine 3, cysteine 6, cysteine 15, and cysteine 21. Histidine 239, glutamate 263, cysteine 307, cysteine 394, cysteine 422, cysteine 447, glutamate 481, and lysine 483 together coordinate hybrid [4Fe-2O-2S] cluster. Residue cysteine 394 is modified to Cysteine persulfide.

This sequence belongs to the HCP family. [4Fe-4S] cluster is required as a cofactor. The cofactor is hybrid [4Fe-2O-2S] cluster.

Its subcellular location is the cytoplasm. It catalyses the reaction A + NH4(+) + H2O = hydroxylamine + AH2 + H(+). In terms of biological role, catalyzes the reduction of hydroxylamine to form NH(3) and H(2)O. This Solidesulfovibrio magneticus (strain ATCC 700980 / DSM 13731 / RS-1) (Desulfovibrio magneticus) protein is Hydroxylamine reductase.